The following is a 441-amino-acid chain: CBL-interacting serine/threonine-protein kinase 6 (441 aa).

Residues 24–278 form the Protein kinase domain; that stretch reads YELGRLLGHG…IEKVMDSPWF (255 aa). Residues 30–38 and K53 each bind ATP; that span reads LGHGTFAKV. D146 functions as the Proton acceptor in the catalytic mechanism. An activation loop region spans residues 164–193; the sequence is DFGLSAFTEHLKQDGLLHTTCGTPAYVAPE. S168 bears the Phosphoserine mark. T182 is modified (phosphothreonine). An NAF domain is found at 310-334; the sequence is EETETLNAFHIIALSEGFDLSPLFE. Residues 341–371 form a PPI region; sequence KREMRFATSRPASSVISSLEEAARVGNKFDV.

It belongs to the protein kinase superfamily. CAMK Ser/Thr protein kinase family. SNF1 subfamily. In terms of assembly, part of a K(+)-channel calcium-sensing kinase/phosphatase complex composed by a calcium sensor CBL (CBL1, CBL2, CBL3 or CBL9), a kinase CIPK (CIPK6, CIPK16 or CIPK23), a phosphatase PP2C (AIP1) and a K(+)-channel (AKT1). Interacts with AKT1, AKT2,CBL1, CBL2, CBL3, CBL4/SOS3 and CBL9. Mn(2+) is required as a cofactor. In terms of processing, autophosphorylated. In terms of tissue distribution, expressed in roots and shoots.

It is found in the endoplasmic reticulum. It catalyses the reaction L-seryl-[protein] + ATP = O-phospho-L-seryl-[protein] + ADP + H(+). The enzyme catalyses L-threonyl-[protein] + ATP = O-phospho-L-threonyl-[protein] + ADP + H(+). CIPK serine-threonine protein kinases interact with CBL proteins. Binding of a CBL protein to the regulatory NAF domain of CIPK protein lead to the activation of the kinase in a calcium-dependent manner. Downstream of CBL1, CBL2, CBL3 and CBL9, regulates by phosphorylation the K(+) conductance and uptake of AKT1. Binds to CBL4 to modulate AKT2 activity by promoting a kinase interaction-dependent but phosphorylation-independent translocation of the channel to the plasma membrane. The protein is CBL-interacting serine/threonine-protein kinase 6 (CIPK6) of Arabidopsis thaliana (Mouse-ear cress).